A 239-amino-acid chain; its full sequence is Urease accessory protein UreE (239 aa).

Residues 185–239 (VASPLDEPHGSGLHIHGIHSHGDGHSHSHDSHSHSHDSDHGHSHSHGDHDHDHKH) form a disordered region. Over residues 204-239 (SHGDGHSHSHDSHSHSHDSDHGHSHSHGDHDHDHKH) the composition is skewed to basic and acidic residues.

The protein belongs to the UreE family.

It localises to the cytoplasm. In terms of biological role, involved in urease metallocenter assembly. Binds nickel. Probably functions as a nickel donor during metallocenter assembly. This is Urease accessory protein UreE from Yersinia frederiksenii.